Reading from the N-terminus, the 400-residue chain is Enoyl-[acyl-carrier-protein] reductase [NADH] (400 aa).

Residues G48–Y53, F74–E75, D111–A112, and L139–A140 each bind NAD(+). Substrate is bound at residue Y225. The active-site Proton donor is Y235. NAD(+) contacts are provided by residues K244 and V273–T275.

Belongs to the TER reductase family. In terms of assembly, monomer.

The catalysed reaction is a 2,3-saturated acyl-[ACP] + NAD(+) = a (2E)-enoyl-[ACP] + NADH + H(+). It participates in lipid metabolism; fatty acid biosynthesis. Functionally, involved in the final reduction of the elongation cycle of fatty acid synthesis (FAS II). Catalyzes the reduction of a carbon-carbon double bond in an enoyl moiety that is covalently linked to an acyl carrier protein (ACP). The polypeptide is Enoyl-[acyl-carrier-protein] reductase [NADH] (Burkholderia lata (strain ATCC 17760 / DSM 23089 / LMG 22485 / NCIMB 9086 / R18194 / 383)).